Consider the following 409-residue polypeptide: Lactadherin (409 aa).

2 EGF-like domains span residues 2 to 41 and 44 to 88; these read SGDF…LICN and EKGP…IHCE. Intrachain disulfides connect Cys6–Cys17, Cys11–Cys29, and Cys31–Cys40. An N-linked (GlcNAc...) asparagine glycan is attached at Asn41. 6 cysteine pairs are disulfide-bonded: Cys48/Cys59, Cys53/Cys76, Cys78/Cys87, Cys91/Cys247, Cys234/Cys238, and Cys252/Cys409. The short motif at 67–69 is the Cell attachment site element; it reads RGD. 2 F5/8 type C domains span residues 91–247 and 252–409; these read CNAP…LLGC and CAEP…LLGC. A glycan (N-linked (GlcNAc...) asparagine) is linked at Asn372.

Mammary epithelial cell surfaces and spermatozoan. Also present in testis, epididymis, uterus, adrenal gland, tonsil, muscle, heart, lymphatic gland, thymus and kidney but not spleen, liver, lung or brain.

Its subcellular location is the membrane. It is found in the secreted. It localises to the cytoplasmic vesicle. The protein resides in the secretory vesicle. The protein localises to the acrosome membrane. Contributes to phagocytic removal of apoptotic cells in many tissues. Plays an important role in the maintenance of intestinal epithelial homeostasis and the promotion of mucosal healing. Promotes VEGF-dependent neovascularization. Specific ligand for the alpha-v/beta-3 and alpha-v/beta-5 receptors. Also binds to phosphatidylserine-enriched cell surfaces in a receptor-independent manner. Zona pellucida-binding protein which may play a role in gamete interaction. The polypeptide is Lactadherin (MFGE8) (Sus scrofa (Pig)).